An 86-amino-acid chain; its full sequence is Large ribosomal subunit protein bL27 (86 aa).

A compositionally biased stretch (gly residues) spans 1–10; sequence MAQKKGGGST. A disordered region spans residues 1–21; that stretch reads MAQKKGGGSTRNGRDSESKRL.

This sequence belongs to the bacterial ribosomal protein bL27 family.

The chain is Large ribosomal subunit protein bL27 from Cupriavidus necator (strain ATCC 17699 / DSM 428 / KCTC 22496 / NCIMB 10442 / H16 / Stanier 337) (Ralstonia eutropha).